We begin with the raw amino-acid sequence, 207 residues long: uncharacterized protein (207 aa).

This is an uncharacterized protein from Bacillus subtilis (strain 168).